We begin with the raw amino-acid sequence, 172 residues long: Adenine phosphoribosyltransferase (172 aa).

The protein belongs to the purine/pyrimidine phosphoribosyltransferase family. Homodimer.

It localises to the cytoplasm. The enzyme catalyses AMP + diphosphate = 5-phospho-alpha-D-ribose 1-diphosphate + adenine. The protein operates within purine metabolism; AMP biosynthesis via salvage pathway; AMP from adenine: step 1/1. Catalyzes a salvage reaction resulting in the formation of AMP, that is energically less costly than de novo synthesis. The chain is Adenine phosphoribosyltransferase from Alkaliphilus oremlandii (strain OhILAs) (Clostridium oremlandii (strain OhILAs)).